Here is a 222-residue protein sequence, read N- to C-terminus: tRNA (guanine-N(1)-)-methyltransferase (222 aa).

S-adenosyl-L-methionine-binding positions include Gly-112 and 132–137 (IGDYVL).

Belongs to the RNA methyltransferase TrmD family. In terms of assembly, homodimer.

It is found in the cytoplasm. The catalysed reaction is guanosine(37) in tRNA + S-adenosyl-L-methionine = N(1)-methylguanosine(37) in tRNA + S-adenosyl-L-homocysteine + H(+). Specifically methylates guanosine-37 in various tRNAs. The chain is tRNA (guanine-N(1)-)-methyltransferase from Azobacteroides pseudotrichonymphae genomovar. CFP2.